We begin with the raw amino-acid sequence, 478 residues long: G2/mitotic-specific cyclin-B (478 aa).

The tract at residues 1 to 153 (MNENDENGPS…KTIQQEEPPR (153 aa)) is disordered. Over residues 16–31 (AKAAALTTDAPAANGA) the composition is skewed to low complexity. The segment covering 65–74 (DNGETKDAKK) has biased composition (basic and acidic residues). A compositionally biased stretch (polar residues) spans 77-102 (SKTGLTSKATMQSGGVQKLSRSNLSR). Basic and acidic residues predominate over residues 110-121 (NNVKKPATEAKR). Positions 133–145 (KRTSSQKSLQEKT) are enriched in polar residues.

The protein belongs to the cyclin family. Cyclin AB subfamily.

Essential for the control of the cell cycle at the G2/M (mitosis) transition. Interacts with the CDC2 protein kinase to form MPF. G2/M cyclins accumulate steadily during G2 and are abruptly destroyed at mitosis. In Emericella nidulans (strain FGSC A4 / ATCC 38163 / CBS 112.46 / NRRL 194 / M139) (Aspergillus nidulans), this protein is G2/mitotic-specific cyclin-B (nimE).